We begin with the raw amino-acid sequence, 350 residues long: Quinone oxidoreductase-like protein 2 (350 aa).

At K36 the chain carries N6-acetyllysine. Position 201 is an N6-succinyllysine (K201). An N6-acetyllysine mark is found at K302 and K328.

The protein belongs to the zinc-containing alcohol dehydrogenase family. Quinone oxidoreductase subfamily.

This chain is Quinone oxidoreductase-like protein 2, found in Mus musculus (Mouse).